The sequence spans 146 residues: 1,4-dihydroxy-2-naphthoyl-CoA hydrolase (146 aa).

D15 is a catalytic residue.

This sequence belongs to the 4-hydroxybenzoyl-CoA thioesterase family. DHNA-CoA hydrolase subfamily.

It carries out the reaction 1,4-dihydroxy-2-naphthoyl-CoA + H2O = 1,4-dihydroxy-2-naphthoate + CoA + H(+). It functions in the pathway cofactor biosynthesis; phylloquinone biosynthesis. Its pathway is quinol/quinone metabolism; 1,4-dihydroxy-2-naphthoate biosynthesis; 1,4-dihydroxy-2-naphthoate from chorismate: step 7/7. Functionally, catalyzes the hydrolysis of 1,4-dihydroxy-2-naphthoyl-CoA (DHNA-CoA) to 1,4-dihydroxy-2-naphthoate (DHNA), a reaction involved in phylloquinone (vitamin K1) biosynthesis. This is 1,4-dihydroxy-2-naphthoyl-CoA hydrolase from Picosynechococcus sp. (strain ATCC 27264 / PCC 7002 / PR-6) (Agmenellum quadruplicatum).